The sequence spans 120 residues: Large ribosomal subunit protein bL19 (120 aa).

It belongs to the bacterial ribosomal protein bL19 family.

Functionally, this protein is located at the 30S-50S ribosomal subunit interface and may play a role in the structure and function of the aminoacyl-tRNA binding site. The polypeptide is Large ribosomal subunit protein bL19 (Chlorobium phaeobacteroides (strain DSM 266 / SMG 266 / 2430)).